Here is a 424-residue protein sequence, read N- to C-terminus: Gamma-glutamyl phosphate reductase (424 aa).

Belongs to the gamma-glutamyl phosphate reductase family.

Its subcellular location is the cytoplasm. It catalyses the reaction L-glutamate 5-semialdehyde + phosphate + NADP(+) = L-glutamyl 5-phosphate + NADPH + H(+). It functions in the pathway amino-acid biosynthesis; L-proline biosynthesis; L-glutamate 5-semialdehyde from L-glutamate: step 2/2. Its function is as follows. Catalyzes the NADPH-dependent reduction of L-glutamate 5-phosphate into L-glutamate 5-semialdehyde and phosphate. The product spontaneously undergoes cyclization to form 1-pyrroline-5-carboxylate. The protein is Gamma-glutamyl phosphate reductase of Dehalococcoides mccartyi (strain ATCC BAA-2100 / JCM 16839 / KCTC 5957 / BAV1).